Reading from the N-terminus, the 151-residue chain is MSDVVVIHTDGGCRPNPGPGGWGAVLRQRHHVREMCGGEPAQTSNNRMELTAPIMALEALTRPVSVHLYTDSTYVRNGITKWVLGWERNGWMTAAKQPVKNADLWRRLQSACARHEVEWFWVKGHSGVADNELADVLATRGLQEALAASVV.

An RNase H type-1 domain is found at Met-1–Gln-143. Mg(2+)-binding residues include Asp-10, Glu-49, Asp-71, and Asp-135.

Belongs to the RNase H family. Monomer. Requires Mg(2+) as cofactor.

It is found in the cytoplasm. The enzyme catalyses Endonucleolytic cleavage to 5'-phosphomonoester.. In terms of biological role, endonuclease that specifically degrades the RNA of RNA-DNA hybrids. The protein is Ribonuclease H of Mycolicibacterium gilvum (strain PYR-GCK) (Mycobacterium gilvum (strain PYR-GCK)).